Reading from the N-terminus, the 474-residue chain is 3-isopropylmalate dehydratase large subunit (474 aa).

3 residues coordinate [4Fe-4S] cluster: Cys353, Cys413, and Cys416.

It belongs to the aconitase/IPM isomerase family. LeuC type 1 subfamily. In terms of assembly, heterodimer of LeuC and LeuD. It depends on [4Fe-4S] cluster as a cofactor.

It catalyses the reaction (2R,3S)-3-isopropylmalate = (2S)-2-isopropylmalate. It functions in the pathway amino-acid biosynthesis; L-leucine biosynthesis; L-leucine from 3-methyl-2-oxobutanoate: step 2/4. Functionally, catalyzes the isomerization between 2-isopropylmalate and 3-isopropylmalate, via the formation of 2-isopropylmaleate. The sequence is that of 3-isopropylmalate dehydratase large subunit from Roseiflexus sp. (strain RS-1).